Here is a 446-residue protein sequence, read N- to C-terminus: Probable D-serine dehydratase (446 aa).

Lysine 118 bears the N6-(pyridoxal phosphate)lysine mark.

This sequence belongs to the serine/threonine dehydratase family. DsdA subfamily. Pyridoxal 5'-phosphate is required as a cofactor.

It catalyses the reaction D-serine = pyruvate + NH4(+). In Ectopseudomonas mendocina (strain ymp) (Pseudomonas mendocina), this protein is Probable D-serine dehydratase.